Here is a 541-residue protein sequence, read N- to C-terminus: Chaperonin GroEL 2 (541 aa).

Residues 29-32 (TLGP), 86-90 (DGTTT), G414, 478-480 (DAA), and D494 contribute to the ATP site.

It belongs to the chaperonin (HSP60) family. As to quaternary structure, forms a cylinder of 14 subunits composed of two heptameric rings stacked back-to-back. Interacts with the co-chaperonin GroES.

The protein localises to the cytoplasm. It carries out the reaction ATP + H2O + a folded polypeptide = ADP + phosphate + an unfolded polypeptide.. Together with its co-chaperonin GroES, plays an essential role in assisting protein folding. The GroEL-GroES system forms a nano-cage that allows encapsulation of the non-native substrate proteins and provides a physical environment optimized to promote and accelerate protein folding. This Frankia casuarinae (strain DSM 45818 / CECT 9043 / HFP020203 / CcI3) protein is Chaperonin GroEL 2.